The primary structure comprises 220 residues: Probable GTP-binding protein EngB (220 aa).

The 177-residue stretch at 23–199 (SVREVAFAGR…ERVLASWLDI (177 aa)) folds into the EngB-type G domain. Residues Ser-38 and Thr-60 each contribute to the Mg(2+) site.

This sequence belongs to the TRAFAC class TrmE-Era-EngA-EngB-Septin-like GTPase superfamily. EngB GTPase family. Mg(2+) is required as a cofactor.

Functionally, necessary for normal cell division and for the maintenance of normal septation. The protein is Probable GTP-binding protein EngB of Dechloromonas aromatica (strain RCB).